The chain runs to 499 residues: Lysine--tRNA ligase (499 aa).

E408 and E415 together coordinate Mg(2+).

It belongs to the class-II aminoacyl-tRNA synthetase family. Homodimer. The cofactor is Mg(2+).

Its subcellular location is the cytoplasm. The enzyme catalyses tRNA(Lys) + L-lysine + ATP = L-lysyl-tRNA(Lys) + AMP + diphosphate. This is Lysine--tRNA ligase from Bacillus cereus (strain B4264).